The chain runs to 451 residues: Chromosomal replication initiator protein DnaA (451 aa).

Residues 1 to 94 (MKPDLSSLWQ…KPEPKPAQPS (94 aa)) are domain I, interacts with DnaA modulators. Residues 87-106 (EPKPAQPSALPTHHNKEENK) form a disordered region. The domain II stretch occupies residues 95 to 113 (ALPTHHNKEENKPQTVIRS). Positions 114-331 (YLNPKHVFEN…GALNRVSANA (218 aa)) are domain III, AAA+ region. ATP contacts are provided by glycine 159, glycine 161, lysine 162, and threonine 163. The tract at residues 332–451 (EFMGAAITID…WSNLIRTLSV (120 aa)) is domain IV, binds dsDNA.

The protein belongs to the DnaA family. As to quaternary structure, oligomerizes as a right-handed, spiral filament on DNA at oriC.

The protein localises to the cytoplasm. Plays an essential role in the initiation and regulation of chromosomal replication. ATP-DnaA binds to the origin of replication (oriC) to initiate formation of the DNA replication initiation complex once per cell cycle. Binds the DnaA box (a 9 base pair repeat at the origin) and separates the double-stranded (ds)DNA. Forms a right-handed helical filament on oriC DNA; dsDNA binds to the exterior of the filament while single-stranded (ss)DNA is stabiized in the filament's interior. The ATP-DnaA-oriC complex binds and stabilizes one strand of the AT-rich DNA unwinding element (DUE), permitting loading of DNA polymerase. After initiation quickly degrades to an ADP-DnaA complex that is not apt for DNA replication. Binds acidic phospholipids. The protein is Chromosomal replication initiator protein DnaA of Pasteurella multocida (strain Pm70).